Consider the following 887-residue polypeptide: Alanine--tRNA ligase (887 aa).

The Zn(2+) site is built by His-564, His-568, Cys-676, and His-680.

Belongs to the class-II aminoacyl-tRNA synthetase family. Zn(2+) is required as a cofactor.

The protein localises to the cytoplasm. The catalysed reaction is tRNA(Ala) + L-alanine + ATP = L-alanyl-tRNA(Ala) + AMP + diphosphate. Catalyzes the attachment of alanine to tRNA(Ala) in a two-step reaction: alanine is first activated by ATP to form Ala-AMP and then transferred to the acceptor end of tRNA(Ala). Also edits incorrectly charged Ser-tRNA(Ala) and Gly-tRNA(Ala) via its editing domain. This chain is Alanine--tRNA ligase, found in Agrobacterium fabrum (strain C58 / ATCC 33970) (Agrobacterium tumefaciens (strain C58)).